The sequence spans 367 residues: Biotin synthase (367 aa).

Residues 73–308 (CCGNTVDLCS…EQIIRYAGGR (236 aa)) enclose the Radical SAM core domain. The [4Fe-4S] cluster site is built by Cys91, Cys95, and Cys98. Residues Cys136, Cys173, Cys233, and Arg303 each contribute to the [2Fe-2S] cluster site.

This sequence belongs to the radical SAM superfamily. Biotin synthase family. In terms of assembly, homodimer. [4Fe-4S] cluster is required as a cofactor. Requires [2Fe-2S] cluster as cofactor.

The enzyme catalyses (4R,5S)-dethiobiotin + (sulfur carrier)-SH + 2 reduced [2Fe-2S]-[ferredoxin] + 2 S-adenosyl-L-methionine = (sulfur carrier)-H + biotin + 2 5'-deoxyadenosine + 2 L-methionine + 2 oxidized [2Fe-2S]-[ferredoxin]. The protein operates within cofactor biosynthesis; biotin biosynthesis; biotin from 7,8-diaminononanoate: step 2/2. In terms of biological role, catalyzes the conversion of dethiobiotin (DTB) to biotin by the insertion of a sulfur atom into dethiobiotin via a radical-based mechanism. This chain is Biotin synthase, found in Picosynechococcus sp. (strain ATCC 27264 / PCC 7002 / PR-6) (Agmenellum quadruplicatum).